Reading from the N-terminus, the 162-residue chain is MSGMRVYLGADHAGYELKQRIIEHLKQTGHEPIDCGALRYDADDDYPAFCIAAATRTVADPGSLGIVLGGSGNGEQIAANKVPGARCALAWSVQTAALAREHNNAQLIGIGGRMHTVAEALAIVDAFVTTPWSKAQRHQRRIDILAEYERTHEAPPVPGAPA.

D-ribulose 5-phosphate is bound by residues 11-12 and 70-74; these read DH and GSGNG. The active-site Proton acceptor is E75. The active-site Proton donor is H102. D-ribulose 5-phosphate is bound by residues N103, R113, R137, and R141.

The protein belongs to the LacAB/RpiB family. As to quaternary structure, homodimer.

The enzyme catalyses aldehydo-D-ribose 5-phosphate = D-ribulose 5-phosphate. Its pathway is carbohydrate degradation; pentose phosphate pathway; D-ribose 5-phosphate from D-ribulose 5-phosphate (non-oxidative stage): step 1/1. Functionally, catalyzes the interconversion of ribulose-5-P and ribose-5-P. The protein is Ribose-5-phosphate isomerase B of Mycobacterium bovis (strain ATCC BAA-935 / AF2122/97).